Consider the following 87-residue polypeptide: Small ribosomal subunit protein bS20 (87 aa).

Positions 1-27 are disordered; that stretch reads MANSVQATKRARQAEKHRQHNAGMRAA. The span at 9–20 shows a compositional bias: basic residues; it reads KRARQAEKHRQH.

Belongs to the bacterial ribosomal protein bS20 family.

Functionally, binds directly to 16S ribosomal RNA. The chain is Small ribosomal subunit protein bS20 from Hydrogenovibrio crunogenus (strain DSM 25203 / XCL-2) (Thiomicrospira crunogena).